The sequence spans 339 residues: Photosystem II assembly lipoprotein Ycf48 (339 aa).

The signal sequence occupies residues 1–22 (MVIVKSWQKIFALLVVLLLCIG). Residue C23 is the site of N-palmitoyl cysteine attachment. Residue C23 is the site of S-diacylglycerol cysteine attachment.

It belongs to the Ycf48 family. Part of early PSII assembly complexes which includes D1 (psbA) and PsbI; not found in mature PSII. Binds to the lumenal side of PSII complexes. Interacts with YidC.

The protein resides in the cellular thylakoid membrane. A factor required for optimal assembly of photosystem II (PSII), acting in the early stages of PSII assembly. Also plays a role in replacement of photodamaged D1 (psbA). Assists YidC in synthesis of chlorophyll-binding proteins. The protein is Photosystem II assembly lipoprotein Ycf48 of Trichormus variabilis (strain ATCC 29413 / PCC 7937) (Anabaena variabilis).